A 147-amino-acid polypeptide reads, in one-letter code: Large ribosomal subunit protein uL15 (147 aa).

Residues 1 to 15 (MTDRVKKTRKLRGHV) are compositionally biased toward basic residues. Positions 1–34 (MTDRVKKTRKLRGHVSHGYGRVGKHRKHSGGRGL) are disordered.

The protein belongs to the universal ribosomal protein uL15 family.

The chain is Large ribosomal subunit protein uL15 (RPL27A) from Encephalitozoon cuniculi (strain GB-M1) (Microsporidian parasite).